A 499-amino-acid chain; its full sequence is NAD(P)H-quinone oxidoreductase chain 4, chloroplastic (499 aa).

Helical transmembrane passes span 4–24, 35–55, 84–104, 111–129, 134–154, 167–187, 208–228, 242–262, 272–292, 305–325, 330–350, 386–406, 416–436, and 462–482; these read FPWL…IFFL, YTIY…CYNF, GLSI…TLAA, SRLF…IGSF, LLLF…LLSV, FILY…GIGL, ALEI…LPII, HYST…YGLI, AHSI…IYAA, IAYS…SITD, GAVL…FLAG, LALP…GIIT, IVIT…SLSM, and LFVL…PDFV.

This sequence belongs to the complex I subunit 4 family.

It localises to the plastid. Its subcellular location is the chloroplast thylakoid membrane. The enzyme catalyses a plastoquinone + NADH + (n+1) H(+)(in) = a plastoquinol + NAD(+) + n H(+)(out). The catalysed reaction is a plastoquinone + NADPH + (n+1) H(+)(in) = a plastoquinol + NADP(+) + n H(+)(out). This is NAD(P)H-quinone oxidoreductase chain 4, chloroplastic from Citrus sinensis (Sweet orange).